We begin with the raw amino-acid sequence, 345 residues long: Ubiquinone biosynthesis O-methyltransferase, mitochondrial (345 aa).

A mitochondrion-targeting transit peptide spans 1–86; that stretch reads MWRGGRLSSR…TYRSSWKKLY (86 aa). Arg124 is a binding site for S-adenosyl-L-methionine. Residues Lys143 and Lys149 each carry the N6-acetyllysine modification. Residues Gly154 and Asp175 each contribute to the S-adenosyl-L-methionine site. At Lys196 the chain carries N6-acetyllysine. Ser222 lines the S-adenosyl-L-methionine pocket. Positions 223, 226, and 227 each coordinate Mg(2+).

This sequence belongs to the class I-like SAM-binding methyltransferase superfamily. UbiG/COQ3 family. Component of a multi-subunit COQ enzyme complex, composed of at least COQ3, COQ4, COQ5, COQ6, COQ7 and COQ9. Requires Mg(2+) as cofactor.

Its subcellular location is the mitochondrion inner membrane. It catalyses the reaction 3,4-dihydroxy-5-(all-trans-decaprenyl)benzoate + S-adenosyl-L-methionine = 4-hydroxy-3-methoxy-5-(all-trans-decaprenyl)benzoate + S-adenosyl-L-homocysteine + H(+). The catalysed reaction is a 3-demethylubiquinone + S-adenosyl-L-methionine = a ubiquinone + S-adenosyl-L-homocysteine. It carries out the reaction 3-demethylubiquinol-10 + S-adenosyl-L-methionine = ubiquinol-10 + S-adenosyl-L-homocysteine + H(+). It functions in the pathway cofactor biosynthesis; ubiquinone biosynthesis. O-methyltransferase required for two non-consecutive steps during ubiquinone biosynthesis. Catalyzes the 2 O-methylation of 3,4-dihydroxy-5-(all-trans-decaprenyl)benzoic acid into 4-hydroxy-3-methoxy-5-(all-trans-decaprenyl)benzoic acid. Also catalyzes the last step of ubiquinone biosynthesis by mediating methylation of 3-demethylubiquinone into ubiquinone. Also able to mediate the methylation of 3-demethylubiquinol-10 into ubiquinol-10. In Rattus norvegicus (Rat), this protein is Ubiquinone biosynthesis O-methyltransferase, mitochondrial.